A 21-amino-acid polypeptide reads, in one-letter code: Peptide PGLa-R2 (21 aa).

Leu-21 is modified (leucine amide).

Expressed by the skin glands.

The protein resides in the secreted. Antimicrobial peptide. In Xenopus ruwenzoriensis (Uganda clawed frog), this protein is Peptide PGLa-R2.